The following is a 628-amino-acid chain: Kinesin-like protein subito (628 aa).

Positions 28–68 (RFRPRPNKKMRLFDNIQESEEESFSEYSDTESEYKYQSSEA) are disordered. Positions 44 to 58 (QESEEESFSEYSDTE) are enriched in acidic residues. The region spanning 87-479 (GPQVFLRLRP…LNFASIAKNI (393 aa)) is the Kinesin motor domain. ATP is bound at residue 169-176 (GTSGSGKT). Residues 509–612 (DYTKELEDEN…KNPASDTDIS (104 aa)) are a coiled coil. Residues 596–628 (KDEIEELKNPASDTDISDDPNESKSPIEILDDD) form a disordered region. Position 607 is a phosphoserine (Ser-607). Thr-609 is modified (phosphothreonine). Position 612 is a phosphoserine (Ser-612).

This sequence belongs to the TRAFAC class myosin-kinesin ATPase superfamily. Kinesin family.

It localises to the cytoplasm. Its subcellular location is the cytoskeleton. Its function is as follows. Required during female meiosis for bipolar spindle formation in the absence of the centrosomes and chromosome homolog segregation. Also has roles in male meiosis and mitotic divisions of the early embryo. This chain is Kinesin-like protein subito (sub), found in Drosophila melanogaster (Fruit fly).